Consider the following 366-residue polypeptide: Ubiquitin carboxyl-terminal hydrolase 46 (366 aa).

One can recognise a USP domain in the interval 35 to 365 (FGLVNFGNTC…SGYILFYQSR (331 aa)). Catalysis depends on Cys-44, which acts as the Nucleophile. Zn(2+) contacts are provided by Cys-182, Cys-185, Cys-229, and Cys-232. Residue His-313 is the Proton acceptor of the active site.

This sequence belongs to the peptidase C19 family. USP12/USP46 subfamily. Interacts with WDR48. Interacts with WDR20. Interacts with DMWD. Component of the USP46/WDR20/WDR48 deubiquitinating complex. As to expression, detected in lung and spleen, and at lower levels in brain, kidney, testis and liver.

The protein localises to the cytoplasm. It catalyses the reaction Thiol-dependent hydrolysis of ester, thioester, amide, peptide and isopeptide bonds formed by the C-terminal Gly of ubiquitin (a 76-residue protein attached to proteins as an intracellular targeting signal).. Functionally, deubiquitinating enzyme that plays a role in behavior, possibly by regulating GABA action. May act by mediating the deubiquitination of GAD1/GAD67. Has almost no deubiquitinating activity by itself and requires the interaction with WDR48 to have a high activity. Not involved in deubiquitination of monoubiquitinated FANCD2. This chain is Ubiquitin carboxyl-terminal hydrolase 46, found in Rattus norvegicus (Rat).